The primary structure comprises 143 residues: Transcriptional regulator MraZ (143 aa).

2 consecutive SpoVT-AbrB domains span residues 5 to 47 (TYTP…PRAE) and 76 to 119 (TDEQ…DAAA).

It belongs to the MraZ family. In terms of assembly, forms oligomers.

The protein localises to the cytoplasm. Its subcellular location is the nucleoid. The polypeptide is Transcriptional regulator MraZ (Mycobacterium sp. (strain JLS)).